We begin with the raw amino-acid sequence, 513 residues long: ATP synthase subunit alpha 2 (513 aa).

169-176 (GDRQTGKT) serves as a coordination point for ATP.

The protein belongs to the ATPase alpha/beta chains family. As to quaternary structure, F-type ATPases have 2 components, CF(1) - the catalytic core - and CF(0) - the membrane proton channel. CF(1) has five subunits: alpha(3), beta(3), gamma(1), delta(1), epsilon(1). CF(0) has three main subunits: a(1), b(2) and c(9-12). The alpha and beta chains form an alternating ring which encloses part of the gamma chain. CF(1) is attached to CF(0) by a central stalk formed by the gamma and epsilon chains, while a peripheral stalk is formed by the delta and b chains.

Its subcellular location is the cell inner membrane. The catalysed reaction is ATP + H2O + 4 H(+)(in) = ADP + phosphate + 5 H(+)(out). Functionally, produces ATP from ADP in the presence of a proton gradient across the membrane. The alpha chain is a regulatory subunit. The sequence is that of ATP synthase subunit alpha 2 from Pseudoalteromonas atlantica (strain T6c / ATCC BAA-1087).